Consider the following 900-residue polypeptide: Suppressor of activated egl-4 protein 1 (900 aa).

3 disordered regions span residues 1–75 (MPPP…HLPT), 340–380 (PVAE…SRKN), and 406–425 (WAST…ESLE). Residues 53-75 (ASGQQHRPSIMSGQSHQNNHLPT) are compositionally biased toward polar residues. Basic and acidic residues-rich tracts occupy residues 358-377 (GDMK…DGPS) and 412-425 (ADEK…ESLE). The region spanning 451–544 (PHINLGKNYQ…AAVEDLLRSD (94 aa)) is the ELM2 domain. The region spanning 560–611 (NDSVLWTPDEIYQFQDAIYQSEKDFDKVAVELPGKSVKECVQFYYTWKKDCP) is the SANT domain. The tract at residues 710-729 (PTAPRAHHTPSASASKKGAQ) is disordered. The segment at 736–758 (FHCRLCDKCFEKVKSLNAHMKSH) adopts a C2H2-type zinc-finger fold.

May be a component of a histone deacetylase complex containing saeg-2, saeg-1 and hda-2. May interact with egl-4. In terms of tissue distribution, ubiquitously expressed.

It is found in the nucleus. Its function is as follows. As a likely component of a histone deacetylase complex, together with saeg-2 and hda-2, functions downstream of the cAMP-dependent kinase egl-4 to regulate the expression of genes required for egg-laying and foraging. In Caenorhabditis elegans, this protein is Suppressor of activated egl-4 protein 1.